Here is a 328-residue protein sequence, read N- to C-terminus: Flotillin-like protein FloA (328 aa).

A run of 2 helical transmembrane segments spans residues 9-29 (LLIT…VPVG) and 30-50 (LWIS…IGMR).

It belongs to the flotillin-like FloA family. Homooligomerizes.

The protein localises to the cell membrane. It localises to the membrane raft. In terms of biological role, found in functional membrane microdomains (FMM) that may be equivalent to eukaryotic membrane rafts. FMMs are highly dynamic and increase in number as cells age. Flotillins are thought to be important factors in membrane fluidity. The chain is Flotillin-like protein FloA from Exiguobacterium sp. (strain ATCC BAA-1283 / AT1b).